The sequence spans 416 residues: N-carbamoyl-L-amino-acid amidohydrolase (416 aa).

Positions 87, 98, 133, and 194 each coordinate a divalent metal cation. Positions 197, 230, 279, 292, and 361 each coordinate an N-carbamoyl-L-alpha-amino acid. The tract at residues 213–331 (HCQGLWWLEF…SIEAVGHFDP (119 aa)) is involved in dimerization. Histidine 386 is an a divalent metal cation binding site.

Belongs to the peptidase M20 family. In terms of assembly, homodimer. It depends on Mn(2+) as a cofactor. Requires Ni(2+) as cofactor. The cofactor is Co(2+). Fe(2+) serves as cofactor.

The enzyme catalyses an N-carbamoyl-L-alpha-amino acid + H2O + 2 H(+) = an L-alpha-amino acid + NH4(+) + CO2. The catalysed reaction is N-carbamoyl-L-methionine + H2O + 2 H(+) = L-methionine + NH4(+) + CO2. It catalyses the reaction N-acetyl-L-methionine + H2O = L-methionine + acetate. It carries out the reaction N(alpha)-formyl-L-methionine + H2O = formate + L-methionine. The enzyme catalyses N-carbamoyl-L-alanine + H2O + 2 H(+) = L-alanine + NH4(+) + CO2. The catalysed reaction is N-carbamoyl-L-cysteine + H2O + 2 H(+) = L-cysteine + NH4(+) + CO2. It catalyses the reaction N-carbamoyl-L-tryptophan + H2O + 2 H(+) = L-tryptophan + NH4(+) + CO2. It carries out the reaction N-carbamoyl-L-valine + H2O + 2 H(+) = L-valine + NH4(+) + CO2. The enzyme catalyses N-carbamoyl-L-phenylalanine + H2O + 2 H(+) = L-phenylalanine + NH4(+) + CO2. With respect to regulation, strongly inhibited by Hg(2+), Cu(2+), Zn(2+), Pb(2+) and Fe(3+) ions, and slightly inhibited by Na(+) and K(+) ions. Beta-mercaptoethanol and 5,5'-dithiobis-(2-nitrobenzoic acid)(DTNB) cause 34% and 42% inhibition, respectively. Catalyzes the hydrolysis of both aliphatic and aromatic N-carbamoyl-L-alpha-amino acids to free L-alpha-amino acids. Is strictly L-specific since it is inactive toward N-carbamoyl-D-alpha-amino acids. Is also able to hydrolyze N-formyl-L-methionine and N-acetyl-L-methionine, but not ureidosuccinate or 3-ureidopropanoate. This Rhizobium meliloti (Ensifer meliloti) protein is N-carbamoyl-L-amino-acid amidohydrolase.